The following is a 31-amino-acid chain: Potassium channel toxin alpha-KTx 5.1 (31 aa).

Cystine bridges form between C3–C21, C8–C26, and C12–C28. Positions R6–Q9 are [R/K]XCQ motif. A Histidine amide modification is found at H31.

Belongs to the short scorpion toxin superfamily. Potassium channel inhibitor family. Alpha-KTx 05 subfamily. Post-translationally, two disulfide bonds are the minimal requirement needed to produce a nativelike and bio-active conformation in this toxin. The third disulfide provides an additional contribution to structure stabilization and can modulate biological potency depending on its position and the structural regions involved in biological activity. In terms of tissue distribution, expressed by the venom gland.

It is found in the secreted. In terms of biological role, blocker for the small conductance calcium-activated potassium channels. Shows the best affinity for KCa2.2/KCNN2 (Kd=0.2 nM), followed by KCa2.3/KCNN3 (Kd=1.1 nM) and KCa2.1/KCNN1 (Kd=325 nM). The chain is Potassium channel toxin alpha-KTx 5.1 from Leiurus hebraeus (Hebrew deathstalker scorpion).